The sequence spans 441 residues: MNIEVNFCHNMEHFGAFEENPKLAIAVSGGTDSLALMLLVKHWNEKVKGEITVLTIDHHLRSESTSEADYVSSICQNIKLQHVTLHWIHKGITGNIQAQARKARYHLLTNYCQEHDILHLITGHHADDIVENFFIRLLRGAGLAGLSSHNIFFVNNVRIIRPLFNITKQDLKKYLEQQNIKWINDPSNNSNKYLRTQVRDLLKSMLISFQNNFTVELLKKRIMLSQMHLTRALDSVNNEIIHYVVYAVKIYSAGFAVIDRKLFRQASPEARYAILSYLLMIVGANTKPQRFSSLQHIILHDIQEYNTYKTLHGCIVEYSIQYIIIYREFGRCYPRSKVVSNSVVWDYRFKVVDNRKNNRMNLTIDYLKKSDYHLIKSYVESNQRNAYFNYSRKILFTFPVIKHLEKVIAIPHIKYYSDKTIQESVSFVFEPKLISRWFHYC.

28–33 (SGGTDS) serves as a coordination point for ATP.

This sequence belongs to the tRNA(Ile)-lysidine synthase family.

The protein resides in the cytoplasm. The enzyme catalyses cytidine(34) in tRNA(Ile2) + L-lysine + ATP = lysidine(34) in tRNA(Ile2) + AMP + diphosphate + H(+). In terms of biological role, ligates lysine onto the cytidine present at position 34 of the AUA codon-specific tRNA(Ile) that contains the anticodon CAU, in an ATP-dependent manner. Cytidine is converted to lysidine, thus changing the amino acid specificity of the tRNA from methionine to isoleucine. This chain is tRNA(Ile)-lysidine synthase, found in Orientia tsutsugamushi (strain Boryong) (Rickettsia tsutsugamushi).